A 630-amino-acid chain; its full sequence is MPILTIREVCNINHWGIGYYDVDDSGEIIVRPNPSQHNQTVSLQKLTEAVQQKHQARLPVLFCFPQILEHRLRDINRAFQTAREECGYKGGYCLVYPIKVNQHRRVIESLMSSGQPHGLEAGSKAELMAVLAHAGNRQTLIVCNGYKDREYIRFALMGEKLGHQVYLVIEKLSEIQMVLEEAEKLGIKPRLGVRARLASQGSGKWQSSGGEKSKFGLSASQVLQLVDILKQKNRLDCLQLLHFHLGSQLGNIRDVATGVHESARFYVELHKLGVNIRCFDVGGGLGVDYEGNRTQSDCSVNYSLNEYAATVVWGISQACLEHGLPHPTIITESGRGITAHHAVLVANVIGVERYKPRRLDAPSPEAPRVLHSMWETWTDISASREKRSLRSWIHEGQFDLADVHNQYNVGLLSLAQRAWAEQLYLNICHEVGELFNEKHRSHRTIIDELQERFADKLYVNFSLFQSLPDAWGIDQLFPVCPITGLNEPIARRAVLLDITCDSDGTIDHYIDGDGIAGTMPMPDYPEEEPPLLGFFMVGAYQEILGNMHNLFGDTATADVVVGEDGQFTVIDYDEGNTVADMLEYVYQDPKELMKRYREQIEHSDLPASQAMSFLKELEAGLNGYTYLEDE.

K99 is modified (N6-(pyridoxal phosphate)lysine). 279–289 (FDVGGGLGVDY) serves as a coordination point for substrate.

It belongs to the Orn/Lys/Arg decarboxylase class-II family. SpeA subfamily. Mg(2+) serves as cofactor. Requires pyridoxal 5'-phosphate as cofactor.

It carries out the reaction L-arginine + H(+) = agmatine + CO2. The protein operates within amine and polyamine biosynthesis; agmatine biosynthesis; agmatine from L-arginine: step 1/1. Functionally, catalyzes the biosynthesis of agmatine from arginine. This chain is Biosynthetic arginine decarboxylase, found in Neisseria meningitidis serogroup B (strain ATCC BAA-335 / MC58).